A 224-amino-acid chain; its full sequence is UPF0758 protein XF_0148 (224 aa).

Residues 102-224 (SIHDPISAGR…PVSFAEHGWL (123 aa)) enclose the MPN domain. Residues His173, His175, and Asp186 each contribute to the Zn(2+) site. Positions 173-186 (HNHPSGNREPSPAD) match the JAMM motif motif.

This sequence belongs to the UPF0758 family.

The polypeptide is UPF0758 protein XF_0148 (Xylella fastidiosa (strain 9a5c)).